A 77-amino-acid polypeptide reads, in one-letter code: Putative antitoxin MazE7 (77 aa).

The disordered stretch occupies residues 49–77 (REASHAETTTQAVRDEDREWEGTVGDGLG).

Forms a complex with cognate toxin MazF7.

Antitoxin component of a type II toxin-antitoxin (TA) system. The sequence is that of Putative antitoxin MazE7 (mazE7) from Mycobacterium tuberculosis (strain CDC 1551 / Oshkosh).